A 575-amino-acid polypeptide reads, in one-letter code: Isocitrate dehydrogenase kinase/phosphatase (575 aa).

Residues 315 to 321 and Lys-336 contribute to the ATP site; that span reads APGIRGM. The active site involves Asp-371.

Belongs to the AceK family.

It is found in the cytoplasm. The enzyme catalyses L-seryl-[isocitrate dehydrogenase] + ATP = O-phospho-L-seryl-[isocitrate dehydrogenase] + ADP + H(+). Functionally, bifunctional enzyme which can phosphorylate or dephosphorylate isocitrate dehydrogenase (IDH) on a specific serine residue. This is a regulatory mechanism which enables bacteria to bypass the Krebs cycle via the glyoxylate shunt in response to the source of carbon. When bacteria are grown on glucose, IDH is fully active and unphosphorylated, but when grown on acetate or ethanol, the activity of IDH declines drastically concomitant with its phosphorylation. The polypeptide is Isocitrate dehydrogenase kinase/phosphatase (Citrobacter koseri (strain ATCC BAA-895 / CDC 4225-83 / SGSC4696)).